The following is a 434-amino-acid chain: Eukaryotic translation initiation factor 3 subunit E (434 aa).

The PCI domain maps to 219–392; the sequence is FFNHPKGRDL…GHVVMGTQPL (174 aa).

It belongs to the eIF-3 subunit E family. As to quaternary structure, component of the eukaryotic translation initiation factor 3 (eIF-3) complex. The eIF-3 complex interacts with pix. Interacts with mxt.

It localises to the cytoplasm. Functionally, component of the eukaryotic translation initiation factor 3 (eIF-3) complex, which is involved in protein synthesis of a specialized repertoire of mRNAs and, together with other initiation factors, stimulates binding of mRNA and methionyl-tRNAi to the 40S ribosome. The eIF-3 complex specifically targets and initiates translation of a subset of mRNAs involved in cell proliferation. This Drosophila grimshawi (Hawaiian fruit fly) protein is Eukaryotic translation initiation factor 3 subunit E (eIF3-S6).